We begin with the raw amino-acid sequence, 611 residues long: Threonine--tRNA ligase (611 aa).

The editing domain stretch occupies residues 1–145 (MRLLLIHSDH…TILPGEGAAA (145 aa)). The interval 195-487 (VHVDLMRAKE…TAAQEVPSFP (293 aa)) is catalytic. Residues Cys287, His339, and His460 each coordinate Zn(2+).

Belongs to the class-II aminoacyl-tRNA synthetase family. In terms of assembly, homodimer. Zn(2+) serves as cofactor.

The protein resides in the cytoplasm. It carries out the reaction tRNA(Thr) + L-threonine + ATP = L-threonyl-tRNA(Thr) + AMP + diphosphate + H(+). Its function is as follows. Catalyzes the attachment of threonine to tRNA(Thr) in a two-step reaction: L-threonine is first activated by ATP to form Thr-AMP and then transferred to the acceptor end of tRNA(Thr). Also edits incorrectly charged L-seryl-tRNA(Thr). This chain is Threonine--tRNA ligase, found in Methanoculleus marisnigri (strain ATCC 35101 / DSM 1498 / JR1).